The primary structure comprises 290 residues: Ribosomal RNA small subunit methyltransferase A (290 aa).

Asn27, Leu29, Gly54, Glu75, Asp100, and Asn125 together coordinate S-adenosyl-L-methionine.

This sequence belongs to the class I-like SAM-binding methyltransferase superfamily. rRNA adenine N(6)-methyltransferase family. RsmA subfamily.

The protein resides in the cytoplasm. The enzyme catalyses adenosine(1518)/adenosine(1519) in 16S rRNA + 4 S-adenosyl-L-methionine = N(6)-dimethyladenosine(1518)/N(6)-dimethyladenosine(1519) in 16S rRNA + 4 S-adenosyl-L-homocysteine + 4 H(+). Specifically dimethylates two adjacent adenosines (A1518 and A1519) in the loop of a conserved hairpin near the 3'-end of 16S rRNA in the 30S particle. May play a critical role in biogenesis of 30S subunits. This Streptococcus thermophilus (strain CNRZ 1066) protein is Ribosomal RNA small subunit methyltransferase A.